The following is a 568-amino-acid chain: Urease subunit alpha (568 aa).

Residues 132 to 568 form the Urease domain; sequence GAIDTHVHYI…LPLAQLYNLF (437 aa). Ni(2+)-binding residues include His137, His139, and Lys219. Lys219 carries the N6-carboxylysine modification. His221 is a binding site for substrate. Residues His248 and His274 each contribute to the Ni(2+) site. His322 acts as the Proton donor in catalysis. Asp362 lines the Ni(2+) pocket.

The protein belongs to the metallo-dependent hydrolases superfamily. Urease alpha subunit family. As to quaternary structure, heterotrimer of UreA (gamma), UreB (beta) and UreC (alpha) subunits. Three heterotrimers associate to form the active enzyme. Requires Ni cation as cofactor. In terms of processing, carboxylation allows a single lysine to coordinate two nickel ions.

Its subcellular location is the cytoplasm. The enzyme catalyses urea + 2 H2O + H(+) = hydrogencarbonate + 2 NH4(+). The protein operates within nitrogen metabolism; urea degradation; CO(2) and NH(3) from urea (urease route): step 1/1. The sequence is that of Urease subunit alpha from Azobacteroides pseudotrichonymphae genomovar. CFP2.